Here is a 1060-residue protein sequence, read N- to C-terminus: Carbamoyl phosphate synthase large chain (1060 aa).

Residues M1–E401 form a carboxyphosphate synthetic domain region. Residues R129, R169, G175, G176, Q208, I210, E215, G241, I242, H243, Q284, and E298 each coordinate ATP. The ATP-grasp 1 domain maps to K133–V327. The Mg(2+) site is built by Q284, E298, and N300. The Mn(2+) site is built by Q284, E298, and N300. An oligomerization domain region spans residues I402 to S546. The carbamoyl phosphate synthetic domain stretch occupies residues L547–G929. The ATP-grasp 2 domain maps to D671 to L861. 10 residues coordinate ATP: R707, R746, L748, E752, G777, V778, H779, S780, Q820, and E832. 3 residues coordinate Mg(2+): Q820, E832, and N834. Mn(2+)-binding residues include Q820, E832, and N834. In terms of domain architecture, MGS-like spans M930–L1060. An allosteric domain region spans residues M930–L1060.

The protein belongs to the CarB family. Composed of two chains; the small (or glutamine) chain promotes the hydrolysis of glutamine to ammonia, which is used by the large (or ammonia) chain to synthesize carbamoyl phosphate. Tetramer of heterodimers (alpha,beta)4. Mg(2+) serves as cofactor. Requires Mn(2+) as cofactor.

The catalysed reaction is hydrogencarbonate + L-glutamine + 2 ATP + H2O = carbamoyl phosphate + L-glutamate + 2 ADP + phosphate + 2 H(+). The enzyme catalyses hydrogencarbonate + NH4(+) + 2 ATP = carbamoyl phosphate + 2 ADP + phosphate + 2 H(+). Its pathway is amino-acid biosynthesis; L-arginine biosynthesis; carbamoyl phosphate from bicarbonate: step 1/1. It participates in pyrimidine metabolism; UMP biosynthesis via de novo pathway; (S)-dihydroorotate from bicarbonate: step 1/3. Large subunit of the glutamine-dependent carbamoyl phosphate synthetase (CPSase). CPSase catalyzes the formation of carbamoyl phosphate from the ammonia moiety of glutamine, carbonate, and phosphate donated by ATP, constituting the first step of 2 biosynthetic pathways, one leading to arginine and/or urea and the other to pyrimidine nucleotides. The large subunit (synthetase) binds the substrates ammonia (free or transferred from glutamine from the small subunit), hydrogencarbonate and ATP and carries out an ATP-coupled ligase reaction, activating hydrogencarbonate by forming carboxy phosphate which reacts with ammonia to form carbamoyl phosphate. The polypeptide is Carbamoyl phosphate synthase large chain (Latilactobacillus sakei subsp. sakei (strain 23K) (Lactobacillus sakei subsp. sakei)).